A 340-amino-acid polypeptide reads, in one-letter code: Glutaminase 2 (340 aa).

Ser89, Asn140, Asn191, Tyr215, and Tyr267 together coordinate substrate.

This sequence belongs to the glutaminase family. Homotetramer.

The enzyme catalyses L-glutamine + H2O = L-glutamate + NH4(+). The polypeptide is Glutaminase 2 (Yersinia pestis).